Reading from the N-terminus, the 257-residue chain is GTP cyclohydrolase FolE2 (257 aa).

The protein belongs to the GTP cyclohydrolase IV family.

It catalyses the reaction GTP + H2O = 7,8-dihydroneopterin 3'-triphosphate + formate + H(+). Its pathway is cofactor biosynthesis; 7,8-dihydroneopterin triphosphate biosynthesis; 7,8-dihydroneopterin triphosphate from GTP: step 1/1. Its function is as follows. Converts GTP to 7,8-dihydroneopterin triphosphate. The sequence is that of GTP cyclohydrolase FolE2 from Syntrophobacter fumaroxidans (strain DSM 10017 / MPOB).